A 481-amino-acid chain; its full sequence is uncharacterized protein (481 aa).

This sequence belongs to the metallophosphoesterase superfamily.

This is an uncharacterized protein from Bacillus subtilis (strain 168).